The chain runs to 166 residues: Glutamyl-tRNA(Gln) amidotransferase subunit C, mitochondrial (166 aa).

Residues 1–44 (MIRGWTIFTLCKPSALVGSSHFNKQFNWAKSQLQFATKVPQQPY) constitute a mitochondrion transit peptide.

It belongs to the GatC family. In terms of assembly, subunit of the heterotrimeric GatCAB amidotransferase (AdT) complex, composed of A, B and C subunits.

The protein resides in the mitochondrion. The enzyme catalyses L-glutamyl-tRNA(Gln) + L-glutamine + ATP + H2O = L-glutaminyl-tRNA(Gln) + L-glutamate + ADP + phosphate + H(+). In terms of biological role, allows the formation of correctly charged Gln-tRNA(Gln) through the transamidation of misacylated Glu-tRNA(Gln) in the mitochondria. The reaction takes place in the presence of glutamine and ATP through an activated gamma-phospho-Glu-tRNA(Gln). In Anopheles darlingi (Mosquito), this protein is Glutamyl-tRNA(Gln) amidotransferase subunit C, mitochondrial.